Reading from the N-terminus, the 229-residue chain is Large ribosomal subunit protein uL3 (229 aa).

Gln151 is modified (N5-methylglutamine).

It belongs to the universal ribosomal protein uL3 family. As to quaternary structure, part of the 50S ribosomal subunit. Forms a cluster with proteins L14 and L19. Methylated by PrmB.

One of the primary rRNA binding proteins, it binds directly near the 3'-end of the 23S rRNA, where it nucleates assembly of the 50S subunit. This chain is Large ribosomal subunit protein uL3, found in Paramagnetospirillum magneticum (strain ATCC 700264 / AMB-1) (Magnetospirillum magneticum).